Consider the following 429-residue polypeptide: Adenylosuccinate synthetase (429 aa).

GTP contacts are provided by residues 12–18 (GDEGKGK) and 40–42 (GHT). The active-site Proton acceptor is the Asp13. 2 residues coordinate Mg(2+): Asp13 and Gly40. Residues 13 to 16 (DEGK), 38 to 41 (NAGH), Thr129, Arg143, Gln224, Thr239, and Arg303 each bind IMP. His41 acts as the Proton donor in catalysis. Substrate is bound at residue 299–305 (ATTGRKR). Residues Arg305, 331–333 (KLD), and 413–415 (SVG) each bind GTP.

This sequence belongs to the adenylosuccinate synthetase family. Homodimer. Mg(2+) serves as cofactor.

It localises to the cytoplasm. It catalyses the reaction IMP + L-aspartate + GTP = N(6)-(1,2-dicarboxyethyl)-AMP + GDP + phosphate + 2 H(+). Its pathway is purine metabolism; AMP biosynthesis via de novo pathway; AMP from IMP: step 1/2. Functionally, plays an important role in the de novo pathway of purine nucleotide biosynthesis. Catalyzes the first committed step in the biosynthesis of AMP from IMP. The chain is Adenylosuccinate synthetase from Desulfosudis oleivorans (strain DSM 6200 / JCM 39069 / Hxd3) (Desulfococcus oleovorans).